The primary structure comprises 131 residues: D-ribose pyranase (131 aa).

Histidine 20 serves as the catalytic Proton donor. Substrate is bound by residues aspartate 28, histidine 98, and 120 to 122 (FSN).

The protein belongs to the RbsD / FucU family. RbsD subfamily. As to quaternary structure, homodecamer.

The protein localises to the cytoplasm. The enzyme catalyses beta-D-ribopyranose = beta-D-ribofuranose. It functions in the pathway carbohydrate metabolism; D-ribose degradation; D-ribose 5-phosphate from beta-D-ribopyranose: step 1/2. Functionally, catalyzes the interconversion of beta-pyran and beta-furan forms of D-ribose. The chain is D-ribose pyranase from Levilactobacillus brevis (strain ATCC 367 / BCRC 12310 / CIP 105137 / JCM 1170 / LMG 11437 / NCIMB 947 / NCTC 947) (Lactobacillus brevis).